The chain runs to 79 residues: Ketoisovalerate oxidoreductase subunit VorC (79 aa).

4Fe-4S ferredoxin-type domains are found at residues 4–33 (AYPVINRVECKACERCIIACPRKVLYMSNK) and 40–70 (HYVEYRGEGCNGCGNCYYTCPEINAIEVHIE). 8 residues coordinate [4Fe-4S] cluster: Cys13, Cys16, Cys19, Cys23, Cys49, Cys52, Cys55, and Cys59.

Heterotrimer of the VorA, VorB and VorC subunits. Requires [4Fe-4S] cluster as cofactor.

The catalysed reaction is 3-methyl-2-oxobutanoate + 2 oxidized [2Fe-2S]-[ferredoxin] + CoA = 2-methylpropanoyl-CoA + 2 reduced [2Fe-2S]-[ferredoxin] + CO2 + H(+). This is Ketoisovalerate oxidoreductase subunit VorC (vorC) from Methanothermobacter marburgensis (strain ATCC BAA-927 / DSM 2133 / JCM 14651 / NBRC 100331 / OCM 82 / Marburg) (Methanobacterium thermoautotrophicum).